The sequence spans 873 residues: F-BAR domain only protein 1 (873 aa).

Residues 1–248 (MSYFGEHFWG…NVENVTVDML (248 aa)) enclose the F-BAR domain. Residues 1–275 (MSYFGEHFWG…LDFDAYSSAA (275 aa)) form a mediates membrane-binding region. Residues 153–172 (RENTSQKEMDKAETKSKKAA) are disordered. Positions 155–178 (NTSQKEMDKAETKSKKAADSLRRS) form a coiled coil. The segment at 267 to 439 (DFDAYSSAAL…KSLFGPPLES (173 aa)) is mediates interaction with the adaptor protein complex AP-2. Ser-295, Ser-343, and Ser-368 each carry phosphoserine. The interval 302–347 (SVDFLESDSGVPPEVDDEGFTVRPDISQNNGAEPPRFSSSDSDFDD) is disordered. 2 disordered regions span residues 381-600 (GSLI…RGPS) and 813-833 (SGHL…SPVA). Over residues 447–466 (TGSSSLGFTSSPSPFSSSSP) the composition is skewed to low complexity. Residue Ser-518 is modified to Phosphoserine. Over residues 567–576 (SLSPSPLGSS) the composition is skewed to low complexity. The tract at residues 593 to 873 (HGISRGPSPV…FATGMYLVSC (281 aa)) is mediates interaction with AGFG1, CALM, DAB2, EPS15, EPS15R, ITSN1 and clathrin. Phosphoserine is present on Ser-600. Residues 609-872 (ALPVATAFTE…RFATGMYLVS (264 aa)) form the MHD domain. Residues 816–827 (LSASWQPQSGPS) are compositionally biased toward polar residues.

The protein belongs to the FCHO family. As to quaternary structure, may oligomerize and form homotetramer. Interacts with AP2A2 and AP2B1; 2 subunits of the adaptor protein complex AP-2. Interacts with DAB2. Interacts with clathrin (CLTC or CLTCL1). Interacts with EPS15, EPS15R and ITSN1. Interacts with AGFG1 and CALM. May interact with ACVR1; linking this receptor to clathrin-mediated endocytosis. In terms of tissue distribution, mainly detected in brain and spleen.

It localises to the membrane. Its subcellular location is the clathrin-coated pit. In terms of biological role, functions in an early step of clathrin-mediated endocytosis. Has both a membrane binding/bending activity and the ability to recruit proteins essential to the formation of functional clathrin-coated pits. May regulate Bmp signaling by regulating clathrin-mediated endocytosis of Bmp receptors. Involved in the regulation of T-cell poliferation and activation. Affects TCR clustering upon receptor triggering and modulates its internalisation, playing a role in TCR-dependent T-cell activation. The protein is F-BAR domain only protein 1 of Mus musculus (Mouse).